A 166-amino-acid polypeptide reads, in one-letter code: Orotate phosphoribosyltransferase (166 aa).

5-phospho-alpha-D-ribose 1-diphosphate contacts are provided by residues Arg-83, Lys-84, His-89, and 109-117 (DDVATTGGS). Orotate contacts are provided by Thr-113 and Arg-141.

It belongs to the purine/pyrimidine phosphoribosyltransferase family. PyrE subfamily. In terms of assembly, homodimer. Mg(2+) is required as a cofactor.

The enzyme catalyses orotidine 5'-phosphate + diphosphate = orotate + 5-phospho-alpha-D-ribose 1-diphosphate. Its pathway is pyrimidine metabolism; UMP biosynthesis via de novo pathway; UMP from orotate: step 1/2. In terms of biological role, catalyzes the transfer of a ribosyl phosphate group from 5-phosphoribose 1-diphosphate to orotate, leading to the formation of orotidine monophosphate (OMP). In Picrophilus torridus (strain ATCC 700027 / DSM 9790 / JCM 10055 / NBRC 100828 / KAW 2/3), this protein is Orotate phosphoribosyltransferase.